Consider the following 1842-residue polypeptide: Fatty acid synthase subunit alpha (1842 aa).

Residues 101–141 (PAEAPASTSSTPKVETAAAAAPAATPAPAPAQTSAPAAALP) are disordered. The span at 116-139 (TAAAAAPAATPAPAPAQTSAPAAA) shows a compositional bias: low complexity. The Carrier domain occupies 145 to 220 (PKALEVLHTL…AIMQSSFNGS (76 aa)). S180 carries the O-(pantetheine 4'-phosphoryl)serine modification. S604 carries the phosphoserine modification. Residues 1079–1616 (LQEVVIDHDL…QVGGQVIVIH (538 aa)) enclose the Ketosynthase family 3 (KS3) domain. C1262 functions as the For beta-ketoacyl synthase activity in the catalytic mechanism. The disordered stretch occupies residues 1304-1332 (GATSNAAKETERGRTPQEMSRPATSTRDG). S1412 carries the phosphoserine modification. Active-site for beta-ketoacyl synthase activity residues include H1501 and H1542. 3 residues coordinate Mg(2+): D1728, V1729, and E1730. Residues 1728–1730 (DVE), Y1754, S1764, 1773–1783 (EAVFKSLGISG), 1797–1800 (SSES), and 1827–1829 (ISH) each bind acetyl-CoA. Residues S1828 and H1829 each coordinate Mg(2+).

This sequence belongs to the thiolase-like superfamily. Fungal fatty acid synthetase subunit alpha family. As to quaternary structure, [Alpha(6)beta(6)] hexamers of two multifunctional subunits (alpha and beta).

It carries out the reaction acetyl-CoA + n malonyl-CoA + 2n NADPH + 4n H(+) = a long-chain-acyl-CoA + n CoA + n CO2 + 2n NADP(+).. The enzyme catalyses a fatty acyl-[ACP] + malonyl-[ACP] + H(+) = a 3-oxoacyl-[ACP] + holo-[ACP] + CO2. The catalysed reaction is a (3R)-hydroxyacyl-[ACP] + NADP(+) = a 3-oxoacyl-[ACP] + NADPH + H(+). Its function is as follows. Fatty acid synthetase catalyzes the formation of long-chain fatty acids from acetyl-CoA, malonyl-CoA and NADPH. The alpha subunit contains domains for: acyl carrier protein, 3-oxoacyl-[acyl-carrier-protein] reductase, and 3-oxoacyl-[acyl-carrier-protein] synthase. This subunit coordinates the binding of the six beta subunits to the enzyme complex. The chain is Fatty acid synthase subunit alpha (fas2) from Schizosaccharomyces pombe (strain 972 / ATCC 24843) (Fission yeast).